The following is a 240-amino-acid chain: Pyridoxine 5'-phosphate synthase (240 aa).

Asparagine 7 serves as a coordination point for 3-amino-2-oxopropyl phosphate. Residue 9-10 participates in 1-deoxy-D-xylulose 5-phosphate binding; that stretch reads DH. Arginine 18 provides a ligand contact to 3-amino-2-oxopropyl phosphate. Histidine 43 (proton acceptor) is an active-site residue. Positions 45 and 50 each coordinate 1-deoxy-D-xylulose 5-phosphate. Catalysis depends on glutamate 70, which acts as the Proton acceptor. A 1-deoxy-D-xylulose 5-phosphate-binding site is contributed by threonine 100. The active-site Proton donor is histidine 191. Residues glycine 192 and 213–214 contribute to the 3-amino-2-oxopropyl phosphate site; that span reads GH.

Belongs to the PNP synthase family. As to quaternary structure, homooctamer; tetramer of dimers.

The protein resides in the cytoplasm. The enzyme catalyses 3-amino-2-oxopropyl phosphate + 1-deoxy-D-xylulose 5-phosphate = pyridoxine 5'-phosphate + phosphate + 2 H2O + H(+). Its pathway is cofactor biosynthesis; pyridoxine 5'-phosphate biosynthesis; pyridoxine 5'-phosphate from D-erythrose 4-phosphate: step 5/5. In terms of biological role, catalyzes the complicated ring closure reaction between the two acyclic compounds 1-deoxy-D-xylulose-5-phosphate (DXP) and 3-amino-2-oxopropyl phosphate (1-amino-acetone-3-phosphate or AAP) to form pyridoxine 5'-phosphate (PNP) and inorganic phosphate. This Microcystis aeruginosa (strain NIES-843 / IAM M-2473) protein is Pyridoxine 5'-phosphate synthase.